A 222-amino-acid polypeptide reads, in one-letter code: MSGKPVLHYFNARGRMECIRWLLAAAGVEFDEKFIQSPEDLEKLKKDGNLMFDQVPMVEIDGMKLAQTRAILNYIATKYDLYGKDMKERALIDMYTEGILDLTEMIMQLVICPPDQKEAKTALAKDRTKNRYLPAFEKVLKSHGQDYLVGNRLTRVDIHLLELLLYVEEFDASLLTSFPLLKAFKSRISSLPNVKKFLQPGSQRKLPVDAKQIEEARKIFKF.

At M1 the chain carries N-acetylmethionine. Residues 3–83 (GKPVLHYFNA…YIATKYDLYG (81 aa)) enclose the GST N-terminal domain. N6-succinyllysine is present on K4. Glutathione contacts are provided by residues Y9, K45, 54 to 55 (QV), and 67 to 68 (QT). Residues 85-208 (DMKERALIDM…QPGSQRKLPV (124 aa)) enclose the GST C-terminal domain.

Belongs to the GST superfamily. Alpha family. As to quaternary structure, homodimer. Homodimer or heterodimer of GSTA1 and GSTA2.

It localises to the cytoplasm. The enzyme catalyses RX + glutathione = an S-substituted glutathione + a halide anion + H(+). It carries out the reaction prostaglandin A2 + glutathione = prostaglandin A2-S-(R)-glutathione. The catalysed reaction is prostaglandin J2 + glutathione = prostaglandin J2-S-(R)-glutathione. It catalyses the reaction (13S)-hydroperoxy-(9Z,11E)-octadecadienoate + 2 glutathione = (13S)-hydroxy-(9Z,11E)-octadecadienoate + glutathione disulfide + H2O. The enzyme catalyses androst-5-ene-3,17-dione = androst-4-ene-3,17-dione. Glutathione S-transferase that catalyzes the nucleophilic attack of the sulfur atom of glutathione on the electrophilic groups of a wide range of exogenous and endogenous compounds. Involved in the formation of glutathione conjugates of both prostaglandin A2 (PGA2) and prostaglandin J2 (PGJ2). It also catalyzes the isomerization of D5-androstene-3,17-dione (AD) into D4-androstene-3,17-dione and may therefore play an important role in hormone biosynthesis. Through its glutathione-dependent peroxidase activity toward the fatty acid hydroperoxide (13S)-hydroperoxy-(9Z,11E)-octadecadienoate/13-HPODE it is also involved in the metabolism of oxidized linoleic acid. In Rattus norvegicus (Rat), this protein is Glutathione S-transferase alpha-1 (Gsta1).